The chain runs to 122 residues: MMARIFILALLGQLCFLPYLDAITSSPKVQVYSRHPVDSNKENFVNCFVSGFHPPQITIELSKDGEKIPKVEESDLSFSNDWTFNRLVSAPFDPNSRSEYTCKVTHLTLQEPKVVKWDPENN.

The N-terminal stretch at 1–22 is a signal peptide; sequence MMARIFILALLGQLCFLPYLDA. In terms of domain architecture, Ig-like C1-type spans 27–115; the sequence is PKVQVYSRHP…HLTLQEPKVV (89 aa). C47 and C102 are disulfide-bonded.

This sequence belongs to the beta-2-microglobulin family. As to quaternary structure, heterodimer of an alpha chain and a beta chain. Beta-2-microglobulin is the beta-chain of major histocompatibility complex class I molecules.

The protein resides in the secreted. In terms of biological role, component of the class I major histocompatibility complex (MHC). Involved in the presentation of peptide antigens to the immune system. This is Beta-2-microglobulin (B2M) from Trichosurus vulpecula (Brush-tailed possum).